A 217-amino-acid polypeptide reads, in one-letter code: NAD(P)H-hydrate epimerase (217 aa).

One can recognise a YjeF N-terminal domain in the interval 1–217 (MRAIENAAMA…VAVADIGLSS (217 aa)). 48–52 (NNGGD) is a binding site for (6S)-NADPHX. K(+)-binding residues include N49 and D127. (6S)-NADPHX contacts are provided by residues 131–137 (GIGQTRP) and D165. Position 168 (T168) interacts with K(+).

The protein belongs to the NnrE/AIBP family. It depends on K(+) as a cofactor.

It catalyses the reaction (6R)-NADHX = (6S)-NADHX. The enzyme catalyses (6R)-NADPHX = (6S)-NADPHX. Catalyzes the epimerization of the S- and R-forms of NAD(P)HX, a damaged form of NAD(P)H that is a result of enzymatic or heat-dependent hydration. This is a prerequisite for the S-specific NAD(P)H-hydrate dehydratase to allow the repair of both epimers of NAD(P)HX. In Cereibacter sphaeroides (strain KD131 / KCTC 12085) (Rhodobacter sphaeroides), this protein is NAD(P)H-hydrate epimerase.